The chain runs to 231 residues: Large ribosomal subunit protein uL1 (231 aa).

The protein belongs to the universal ribosomal protein uL1 family. As to quaternary structure, part of the 50S ribosomal subunit.

Its function is as follows. Binds directly to 23S rRNA. The L1 stalk is quite mobile in the ribosome, and is involved in E site tRNA release. Protein L1 is also a translational repressor protein, it controls the translation of the L11 operon by binding to its mRNA. In Pseudomonas entomophila (strain L48), this protein is Large ribosomal subunit protein uL1.